We begin with the raw amino-acid sequence, 258 residues long: Ribosomal RNA small subunit methyltransferase J (258 aa).

Residues 104–105 (RD), 120–121 (ER), and Asp175 each bind S-adenosyl-L-methionine.

This sequence belongs to the methyltransferase superfamily. RsmJ family.

It is found in the cytoplasm. It catalyses the reaction guanosine(1516) in 16S rRNA + S-adenosyl-L-methionine = N(2)-methylguanosine(1516) in 16S rRNA + S-adenosyl-L-homocysteine + H(+). Specifically methylates the guanosine in position 1516 of 16S rRNA. The chain is Ribosomal RNA small subunit methyltransferase J from Chromobacterium violaceum (strain ATCC 12472 / DSM 30191 / JCM 1249 / CCUG 213 / NBRC 12614 / NCIMB 9131 / NCTC 9757 / MK).